A 199-amino-acid polypeptide reads, in one-letter code: Interleukin-11 (199 aa).

The first 21 residues, 1 to 21, serve as a signal peptide directing secretion; that stretch reads MNCVCRLVLVVLSLWPDRVVA. The important for interaction with IL11RA and for the stimulation of cell proliferation stretch occupies residues 182–190; that stretch reads HLTLDWAVR.

This sequence belongs to the IL-6 superfamily. As to quaternary structure, interacts with IL11RA to associate with IL6ST, giving rise to a multimeric signaling complex.

It localises to the secreted. Functionally, cytokine that stimulates the proliferation of hematopoietic stem cells and megakaryocyte progenitor cells and induces megakaryocyte maturation resulting in increased platelet production. Also promotes the proliferation of hepatocytes in response to liver damage. Binding to its receptor formed by IL6ST and IL11RA activates a signaling cascade that promotes cell proliferation. Signaling leads to the activation of intracellular protein kinases and the phosphorylation of STAT3. The interaction with the membrane-bound IL11RA and IL6ST stimulates 'classic signaling', whereas the binding of IL11 and soluble IL11RA to IL6ST stimulates 'trans-signaling'. This chain is Interleukin-11, found in Rattus norvegicus (Rat).